Reading from the N-terminus, the 276-residue chain is N-acetylmuramoyl-L-alanine amidase AmiD (276 aa).

Residues 1–16 form the signal peptide; the sequence is MRRFFWLVAAALLLAG. A lipid anchor (N-palmitoyl cysteine) is attached at Cys-17. Cys-17 carries S-diacylglycerol cysteine lipidation. One can recognise an N-acetylmuramoyl-L-alanine amidase domain in the interval 42–179; sequence PRIKVLVIHY…APQRKDDPGP (138 aa). Position 50 (His-50) interacts with Zn(2+). Residue 51–52 coordinates substrate; the sequence is YT. The active-site Proton acceptor is Glu-119. His-166 and Asp-176 together coordinate Zn(2+).

It belongs to the N-acetylmuramoyl-L-alanine amidase 2 family. The cofactor is Zn(2+).

It is found in the cell outer membrane. The catalysed reaction is Hydrolyzes the link between N-acetylmuramoyl residues and L-amino acid residues in certain cell-wall glycopeptides.. In Escherichia coli (strain K12), this protein is N-acetylmuramoyl-L-alanine amidase AmiD (amiD).